The following is a 134-amino-acid chain: Iron-sulfur cluster insertion protein ErpA (134 aa).

3 residues coordinate iron-sulfur cluster: Cys-47, Cys-126, and Cys-128.

This sequence belongs to the HesB/IscA family. Homodimer. It depends on iron-sulfur cluster as a cofactor.

Required for insertion of 4Fe-4S clusters for at least IspG. In Coxiella burnetii (strain Dugway 5J108-111), this protein is Iron-sulfur cluster insertion protein ErpA.